The sequence spans 215 residues: 3-isopropylmalate dehydratase small subunit (215 aa).

Belongs to the LeuD family. LeuD type 1 subfamily. In terms of assembly, heterodimer of LeuC and LeuD.

The enzyme catalyses (2R,3S)-3-isopropylmalate = (2S)-2-isopropylmalate. It participates in amino-acid biosynthesis; L-leucine biosynthesis; L-leucine from 3-methyl-2-oxobutanoate: step 2/4. Its function is as follows. Catalyzes the isomerization between 2-isopropylmalate and 3-isopropylmalate, via the formation of 2-isopropylmaleate. This chain is 3-isopropylmalate dehydratase small subunit, found in Xanthomonas campestris pv. campestris (strain 8004).